The sequence spans 486 residues: Deleted in azoospermia protein 3 (486 aa).

Polar residues predominate over residues 1-10 (MSAANPETPN). Residues 1–27 (MSAANPETPNSTISREASTQSSSAAAS) form a disordered region. Residues 11 to 27 (STISREASTQSSSAAAS) are compositionally biased toward low complexity. The RRM domain maps to 40-115 (NTVFVGGIDA…KKLKLGPAIR (76 aa)). DAZ domains are found at residues 167–190 (AYSA…YNYQ), 191–214 (EYPT…YNYQ), 215–238 (PFPA…YNYQ), 239–262 (AFPA…YNYQ), 263–286 (PFPA…YNYQ), 287–310 (AFPA…YNYQ), 311–334 (AFPA…YNYQ), 335–358 (AFPA…YNYQ), 359–382 (AFPA…YNYQ), 383–406 (AFPA…YNYQ), 407–430 (AFPA…YNYQ), and 431–454 (AFPA…YNYQ).

This sequence belongs to the RRM DAZ family. In terms of assembly, forms a heterodimer with BOLL and DAZL. Interacts with PUM2, DAZAP1, DAZAP2, DZIP1 and DZIP3. In terms of tissue distribution, testis specific.

It is found in the cytoplasm. Its subcellular location is the nucleus. Functionally, RNA-binding protein that plays an essential role in spermatogenesis. May act by binding to the 3'-UTR of mRNAs and regulating their translation. The polypeptide is Deleted in azoospermia protein 3 (DAZ3) (Homo sapiens (Human)).